The sequence spans 401 residues: tRNA(Met) cytidine acetate ligase (401 aa).

ATP contacts are provided by residues 7-20, glycine 102, asparagine 164, and arginine 189; that span reads IVEY…HLYH.

The protein belongs to the TmcAL family.

It is found in the cytoplasm. It catalyses the reaction cytidine(34) in elongator tRNA(Met) + acetate + ATP = N(4)-acetylcytidine(34) in elongator tRNA(Met) + AMP + diphosphate. In terms of biological role, catalyzes the formation of N(4)-acetylcytidine (ac(4)C) at the wobble position of elongator tRNA(Met), using acetate and ATP as substrates. First activates an acetate ion to form acetyladenylate (Ac-AMP) and then transfers the acetyl group to tRNA to form ac(4)C34. This Thermoanaerobacter pseudethanolicus (strain ATCC 33223 / 39E) (Clostridium thermohydrosulfuricum) protein is tRNA(Met) cytidine acetate ligase.